A 417-amino-acid chain; its full sequence is C6 finger transcription factor traC (417 aa).

Residues 1-40 form a disordered region; sequence MNFSEQFTGRSEPGRKANRTSNNNTNSTTNVATVTTDDSN. The span at 19-37 shows a compositional bias: low complexity; the sequence is RTSNNNTNSTTNVATVTTD. Residues 44–73 constitute a DNA-binding region (zn(2)-C6 fungal-type); it reads CDRCKGQKLRCIWENGSNTCRRCTRARAVC. 2 disordered regions span residues 75-94 and 104-128; these read QPRP…KHHV and WVSS…DDHD. The segment covering 80 to 94 has biased composition (basic residues); the sequence is PFGRPRCSTKSKHHV. The span at 104–114 shows a compositional bias: polar residues; the sequence is WVSSTTQQPQE.

The protein resides in the nucleus. In terms of biological role, C6 finger transcription factor; part of the tra gene cluster that produces terrestric acid. The clavatol biosynthesis cluster cla and the terrestric acid cluster tra are both involved in the production of peniphenones and penilactones. The chain is C6 finger transcription factor traC from Penicillium crustosum (Blue mold fungus).